The primary structure comprises 250 residues: Proteasome subunit alpha type-7-B (250 aa).

K62 participates in a covalent cross-link: Glycyl lysine isopeptide (Lys-Gly) (interchain with G-Cter in ubiquitin).

Belongs to the peptidase T1A family. In terms of assembly, component of the 20S core complex of the 26S proteasome. The 26S proteasome is composed of a core protease (CP), known as the 20S proteasome, capped at one or both ends by the 19S regulatory particle (RP/PA700). The 20S proteasome core is composed of 28 subunits that are arranged in four stacked rings, resulting in a barrel-shaped structure. The two end rings are each formed by seven alpha subunits, and the two central rings are each formed by seven beta subunits. The catalytic chamber with the active sites is on the inside of the barrel.

It is found in the cytoplasm. Its subcellular location is the nucleus. Its function is as follows. The proteasome is a multicatalytic proteinase complex which is characterized by its ability to cleave peptides with Arg, Phe, Tyr, Leu, and Glu adjacent to the leaving group at neutral or slightly basic pH. The proteasome has an ATP-dependent proteolytic activity. The sequence is that of Proteasome subunit alpha type-7-B (PAD2) from Arabidopsis thaliana (Mouse-ear cress).